Here is a 452-residue protein sequence, read N- to C-terminus: Selenide, water dikinase 2 (452 aa).

At Ala-2 the chain carries N-acetylalanine. A Phosphoserine modification is found at Ser-49. The active site involves Sec-63. A non-standard amino acid (selenocysteine) is located at residue Sec-63. Lys-66 provides a ligand contact to ATP. The interval 86-111 is disordered; the sequence is PPLTSGLVGGQEETVQEGGLSTRPGP. The segment covering 95–105 has biased composition (low complexity); that stretch reads GQEETVQEGGL. ATP contacts are provided by residues 121-123, Asp-141, Asp-164, and 215-218; these read GMD and GGQT. Asp-123 lines the Mg(2+) pocket. Position 164 (Asp-164) interacts with Mg(2+). Asp-319 is a Mg(2+) binding site.

This sequence belongs to the selenophosphate synthase 1 family. Class I subfamily. Homodimer. Mg(2+) is required as a cofactor. In terms of processing, truncated SEPHS2 proteins produced by failed UGA/Sec decoding are ubiquitinated by the CRL2(KLHDC3) complex, which recognizes the glycine (Gly) at the C-terminus of truncated SEPHS2 proteins.

The enzyme catalyses hydrogenselenide + ATP + H2O = selenophosphate + AMP + phosphate + 2 H(+). Synthesizes selenophosphate from selenide and ATP. This Mus musculus (Mouse) protein is Selenide, water dikinase 2 (Sephs2).